The following is a 1370-amino-acid chain: Major capsid protein (1370 aa).

The protein belongs to the herpesviridae major capsid protein family. Homomultimer. Makes the hexons and eleven out of twelve pentons. Interacts with triplex proteins 1/TRX1 and 2/TRX2; adjacent capsomers are linked together in groups of three by triplexes, heterotrimeric complexes composed of one molecule of TRX1 and two molecules of TRX2. Interacts with scaffold protein; this interaction allows efficient MCP transport to the host nucleus. Interacts with capsid vertex component 2/CVC2. Interacts with the small capsomere-interacting protein/SCP.

It localises to the virion. The protein resides in the host nucleus. Self-assembles to form an icosahedral capsid with a T=16 symmetry, about 200 nm in diameter, and consisting of 150 hexons and 12 pentons (total of 162 capsomers). Hexons form the edges and faces of the capsid and are each composed of six MCP molecules. In contrast, one penton is found at each of the 12 vertices. Eleven of the pentons are MCP pentamers, while the last vertex is occupied by the portal complex. The capsid is surrounded by a layer of proteinaceous material designated the tegument which, in turn, is enclosed in an envelope of host cell-derived lipids containing virus-encoded glycoproteins. The chain is Major capsid protein from Human cytomegalovirus (strain AD169) (HHV-5).